Consider the following 243-residue polypeptide: Cell division protein ZipA (243 aa).

Topologically, residues 1-4 (MSDV) are periplasmic. A helical membrane pass occupies residues 5–25 (TLLRIGIAIVGILFVAAVFFF). Residues 26-243 (STPKTSAHRV…VPPLIKNSRW (218 aa)) lie on the Cytoplasmic side of the membrane. Residues 32–89 (AHRVRTKKEEPPRERREPMLSTEADNSPPQGVDEVPASVSQQQVNPEANKPGEVQLGK) form a disordered region. Positions 38–49 (KKEEPPRERREP) are enriched in basic and acidic residues.

Belongs to the ZipA family. In terms of assembly, interacts with FtsZ via their C-terminal domains.

The protein localises to the cell inner membrane. Its function is as follows. Essential cell division protein that stabilizes the FtsZ protofilaments by cross-linking them and that serves as a cytoplasmic membrane anchor for the Z ring. Also required for the recruitment to the septal ring of downstream cell division proteins. The polypeptide is Cell division protein ZipA (Xylella fastidiosa (strain 9a5c)).